The chain runs to 72 residues: Beta-defensin 104 (72 aa).

The first 22 residues, 1–22, serve as a signal peptide directing secretion; that stretch reads MQRLVLLLAISLLLYQDLPVRS. Intrachain disulfides connect Cys-30-Cys-57, Cys-37-Cys-51, and Cys-41-Cys-58.

It belongs to the beta-defensin family. High expression in the testis. Gastric antrum exhibited relatively high levels. A lower expression is observed in uterus and neutrophils thyroid gland, lung, and kidney. No detectable expression in other tissues tested.

It is found in the secreted. Functionally, has antimicrobial activity. Synergistic effects with lysozyme and DEFB103. The chain is Beta-defensin 104 (DEFB104A) from Homo sapiens (Human).